The sequence spans 181 residues: MSANENNLIWIDLEMTGLDPERDRIIEIATLVTDANLNILAEGPTIAVHQSDEQLALMDDWNVRTHTASGLVERVKASTMGDREAELATLEFLKQWVPAGKSPICGNSIGQDRRFLFKYMPELEVYFHYRYLDVSTLKELARRWKPEILDGFTKQGTHQAMDDIRESVAELAYYREHFIKL.

The Exonuclease domain occupies 8–171 (LIWIDLEMTG…DDIRESVAEL (164 aa)). The active site involves Tyr-129.

Belongs to the oligoribonuclease family.

The protein resides in the cytoplasm. In terms of biological role, 3'-to-5' exoribonuclease specific for small oligoribonucleotides. This Shigella flexneri protein is Oligoribonuclease.